Consider the following 222-residue polypeptide: uncharacterized protein (222 aa).

4 consecutive transmembrane segments (helical) span residues 23–43 (FFAAAMLPATLVIIFVETGLL), 67–87 (IWVLSPSVAVVAVLGDQIGYL), 157–177 (IVGGILWGGGVTVAGYFLGNV), and 187–207 (IILGILFVSLLPALIAAWHGY).

The protein belongs to the DedA family.

The protein localises to the cell membrane. This is an uncharacterized protein from Mycobacterium leprae (strain TN).